A 561-amino-acid polypeptide reads, in one-letter code: AT-rich interactive domain-containing protein 3B (561 aa).

Position 1 is an N-acetylmethionine (Met1). Residues 1 to 17 are compositionally biased toward low complexity; sequence MEPLQQQQQQQQQQQKQ. Disordered stretches follow at residues 1–36, 53–122, and 136–179; these read MEPL…QQMR, LSAT…SKYF, and PMSN…WNLD. Ser89 is modified (phosphoserine). Over residues 90 to 109 the composition is skewed to acidic residues; that stretch reads EPEEEDGGLEDEDGDDEVAE. Residues 152–162 show a composition bias toward basic and acidic residues; sequence QAKEDHTKDAS. Residues 164-178 are compositionally biased toward polar residues; the sequence is ASPSVSTAGQPNWNL. Ser165 bears the Phosphoserine mark. The segment at 203–365 is interaction with RB1; that stretch reads SRDFAKLYEL…SPPKIRFPIL (163 aa). The region spanning 215–307 is the ARID domain; sequence DPERKEFLDD…YLYAYECEKK (93 aa). Ser311 bears the Phosphoserine mark. Asymmetric dimethylarginine is present on Arg361. The tract at residues 370–397 is disordered; it reads SSGTNTSSPRISPATTLRKGDGAPVTTV. The region spanning 419-517 is the REKLES domain; the sequence is AALEQLRERL…GVLFAQKPVV (99 aa). The segment at 490-513 is interaction with ARID3A; the sequence is SSIGSINMSVDIDGTTYAGVLFAQ. Residues 523–552 show a composition bias toward low complexity; that stretch reads SAPQSLGSSASSSSSSHCSPSPTSSRGTPS. A disordered region spans residues 523-561; it reads SAPQSLGSSASSSSSSHCSPSPTSSRGTPSAEPSTSWSL.

In terms of assembly, heterodimer with ARID3A. Interacts with unphosphorylated RB1. In terms of tissue distribution, expressed in placenta, testis and leukocytes. Expressed in neuroblastoma. Present in K-562 erythrocytic leukemia cell line (at protein level).

It localises to the nucleus. In terms of biological role, transcription factor which may be involved in neuroblastoma growth and malignant transformation. Favors nuclear targeting of ARID3A. This chain is AT-rich interactive domain-containing protein 3B (ARID3B), found in Homo sapiens (Human).